The following is a 554-amino-acid chain: Phosphomethylpyrimidine synthase (554 aa).

Substrate contacts are provided by residues N191, M220, Y249, H285, 305-307 (SRG), 346-349 (DGLR), and E385. H389 lines the Zn(2+) pocket. Y412 serves as a coordination point for substrate. H453 contributes to the Zn(2+) binding site. [4Fe-4S] cluster-binding residues include C533, C536, and C541.

Belongs to the ThiC family. In terms of assembly, homodimer. [4Fe-4S] cluster is required as a cofactor.

The catalysed reaction is 5-amino-1-(5-phospho-beta-D-ribosyl)imidazole + S-adenosyl-L-methionine = 4-amino-2-methyl-5-(phosphooxymethyl)pyrimidine + CO + 5'-deoxyadenosine + formate + L-methionine + 3 H(+). It participates in cofactor biosynthesis; thiamine diphosphate biosynthesis. Functionally, catalyzes the synthesis of the hydroxymethylpyrimidine phosphate (HMP-P) moiety of thiamine from aminoimidazole ribotide (AIR) in a radical S-adenosyl-L-methionine (SAM)-dependent reaction. In Ehrlichia chaffeensis (strain ATCC CRL-10679 / Arkansas), this protein is Phosphomethylpyrimidine synthase.